Consider the following 586-residue polypeptide: Acetylcholinesterase (586 aa).

An N-terminal signal peptide occupies residues 1–21 (MNLLVTSSLGVLLHLVVLCQA). An N-linked (GlcNAc...) asparagine glycan is attached at N80. C88 and C115 are oxidised to a cystine. The active-site Acyl-ester intermediate is S221. C275 and C286 form a disulfide bridge. The Charge relay system role is filled by E348. Residues C423 and C542 are joined by a disulfide bond. N-linked (GlcNAc...) asparagine glycosylation occurs at N437. The Charge relay system role is filled by H461. Residues N478 and N554 are each glycosylated (N-linked (GlcNAc...) asparagine). A lipid anchor (GPI-anchor amidated serine) is attached at S564. Positions 565-586 (SGTSSSKGIIFYVLFSILYLIF) are cleaved as a propeptide — removed in mature form.

It belongs to the type-B carboxylesterase/lipase family. Isoform H form is a homodimer; the asymmetric form is a disulfide-bonded oligomer composed of a collagenic subunit (Q) and a variable number of T catalytic subunits. In terms of processing, an interchain disulfide bond is present in what becomes position 593 of the T isoform. As to expression, found in the synapses and to a lower extent in extrajunctional areas of muscle and nerve, and on erythrocyte membranes.

Its subcellular location is the cell membrane. The protein localises to the synapse. The catalysed reaction is acetylcholine + H2O = choline + acetate + H(+). Inhibited by substrate concentrations above 0.5 mM. Its function is as follows. Terminates signal transduction at the neuromuscular junction by rapid hydrolysis of the acetylcholine released into the synaptic cleft. May be involved in cell-cell interactions. This is Acetylcholinesterase (ache) from Tetronarce californica (Pacific electric ray).